Here is a 304-residue protein sequence, read N- to C-terminus: Dihydroorotate dehydrogenase B (NAD(+)), catalytic subunit (304 aa).

Residues Ser21 and 45 to 46 contribute to the FMN site; that span reads KA. Substrate contacts are provided by residues Lys45 and 69 to 73; that span reads NAIGL. FMN is bound by residues Asn99 and Asn127. Substrate is bound at residue Asn127. Residue Cys130 is the Nucleophile of the active site. FMN-binding residues include Lys165 and Ile191. 192–193 lines the substrate pocket; sequence NT. FMN contacts are provided by residues Gly217, 243 to 244, and 265 to 266; these read GG and GT.

This sequence belongs to the dihydroorotate dehydrogenase family. Type 1 subfamily. Heterotetramer of 2 PyrK and 2 PyrD type B subunits. FMN is required as a cofactor.

The protein localises to the cytoplasm. It carries out the reaction (S)-dihydroorotate + NAD(+) = orotate + NADH + H(+). The protein operates within pyrimidine metabolism; UMP biosynthesis via de novo pathway; orotate from (S)-dihydroorotate (NAD(+) route): step 1/1. Catalyzes the conversion of dihydroorotate to orotate with NAD(+) as electron acceptor. This Listeria monocytogenes serotype 4a (strain HCC23) protein is Dihydroorotate dehydrogenase B (NAD(+)), catalytic subunit (pyrD).